Consider the following 163-residue polypeptide: Peptide methionine sulfoxide reductase MsrA (163 aa).

The active site involves Cys10.

The protein belongs to the MsrA Met sulfoxide reductase family.

It carries out the reaction L-methionyl-[protein] + [thioredoxin]-disulfide + H2O = L-methionyl-(S)-S-oxide-[protein] + [thioredoxin]-dithiol. The enzyme catalyses [thioredoxin]-disulfide + L-methionine + H2O = L-methionine (S)-S-oxide + [thioredoxin]-dithiol. Functionally, has an important function as a repair enzyme for proteins that have been inactivated by oxidation. Catalyzes the reversible oxidation-reduction of methionine sulfoxide in proteins to methionine. This is Peptide methionine sulfoxide reductase MsrA from Ruthia magnifica subsp. Calyptogena magnifica.